Consider the following 215-residue polypeptide: Ribose-5-phosphate isomerase A (215 aa).

Substrate contacts are provided by residues Thr26 to Thr29, Asp79 to Asp82, and Lys92 to Gly95. Glu101 functions as the Proton acceptor in the catalytic mechanism. Lys119 contacts substrate.

It belongs to the ribose 5-phosphate isomerase family. Homodimer.

The enzyme catalyses aldehydo-D-ribose 5-phosphate = D-ribulose 5-phosphate. Its pathway is carbohydrate degradation; pentose phosphate pathway; D-ribose 5-phosphate from D-ribulose 5-phosphate (non-oxidative stage): step 1/1. In terms of biological role, catalyzes the reversible conversion of ribose-5-phosphate to ribulose 5-phosphate. The sequence is that of Ribose-5-phosphate isomerase A from Xylella fastidiosa (strain Temecula1 / ATCC 700964).